We begin with the raw amino-acid sequence, 259 residues long: Global transcriptional regulator CodY (259 aa).

A GAF domain region spans residues 1 to 155 (MALLQKTRII…GATVVGMEIL (155 aa)). A DNA-binding region (H-T-H motif) is located at residues 203–222 (ASKIADRVGITRSVIVNALR). Ser215 bears the Phosphoserine mark.

The protein belongs to the CodY family.

The protein resides in the cytoplasm. In terms of biological role, DNA-binding global transcriptional regulator which is involved in the adaptive response to starvation and acts by directly or indirectly controlling the expression of numerous genes in response to nutrient availability. During rapid exponential growth, CodY is highly active and represses genes whose products allow adaptation to nutrient depletion. This chain is Global transcriptional regulator CodY, found in Bacillus velezensis (strain DSM 23117 / BGSC 10A6 / LMG 26770 / FZB42) (Bacillus amyloliquefaciens subsp. plantarum).